The sequence spans 528 residues: 3-ketoacyl-CoA synthase 2 (528 aa).

Transmembrane regions (helical) follow at residues Leu36–Leu56 and Phe78–Phe98. Positions Tyr97–Val388 constitute an FAE domain. Catalysis depends on residues Cys241, His320, His407, His411, and Asn444.

The protein belongs to the thiolase-like superfamily. Chalcone/stilbene synthases family. In terms of tissue distribution, expressed in siliques, flowers and stems. In young seedlings, expressed in the central cylinder of primary roots, in emerging lateral roots and in their root cap, but not in aboveground tissues such as hypocotyls, cotyledons and leaves. Expressed in sepals in mature flowers and in the chalaza and micropyle region of developing seeds shortly prior to or just after the detachment from the funiculus. Expressed in roots, flowers, cauline leaves and siliques.

Its subcellular location is the membrane. The enzyme catalyses a very-long-chain acyl-CoA + malonyl-CoA + H(+) = a very-long-chain 3-oxoacyl-CoA + CO2 + CoA. Its pathway is lipid metabolism; fatty acid biosynthesis. Its activity is regulated as follows. Inhibited by K3 herbicides such as allidochlor, anilofos, cafenstrole and flufenacet. Strongly inhibited by metazachlor. Functionally, mediates the synthesis of VLCFAs from 22 to 26 carbons in length (e.g. C22, C24, C26). Involved in the elongation of C20 fatty acid suberin precursors. Functionally redundant with KCS20 in the two-carbon elongation of C22 fatty acids that is required for cuticular wax and root suberin biosynthesis. The protein is 3-ketoacyl-CoA synthase 2 of Arabidopsis thaliana (Mouse-ear cress).